The chain runs to 462 residues: Gamma-glutamylethanolamide synthetase GlnA4 (462 aa).

One can recognise a GS beta-grasp domain in the interval 30 to 126 (GDIDTVVLAF…AVADLAWEDG (97 aa)). The 330-residue stretch at 133-462 (PRQILRRQLE…WELRRSFERM (330 aa)) folds into the GS catalytic domain. Positions 156 and 158 each coordinate Mg(2+). Glu214 serves as a coordination point for ATP. Mg(2+)-binding residues include Glu219 and Glu226. Gly270 provides a ligand contact to L-glutamate. His274 contributes to the Mg(2+) binding site. ATP is bound at residue 276–278 (HLS). The L-glutamate site is built by Arg325 and Arg343. Residues Arg343 and Arg348 each coordinate ATP. Residue Glu359 coordinates Mg(2+). Arg361 serves as a coordination point for L-glutamate.

The protein belongs to the glutamine synthetase family. Requires Mg(2+) as cofactor.

The catalysed reaction is ethanolamine + L-glutamate + ATP = gamma-L-glutamylethanolamide + ADP + phosphate + H(+). It participates in amine and polyamine degradation; ethanolamine degradation. Very slightly decreased activity with glutamine synthetase (GS) inhibitor methionine sulfoximine (MSO). Its function is as follows. Involved in the catabolism of monoamine ethanolamine. Catalyzes the ATP-dependent gamma-glutamylation of ethanolamine. No activity with polyamines. No complementation of the L-glutamine auxotrophy of an E.coli glnA mutant. Enables survival of S.coelicolor under high local environmental ethanolamine conditions. May play a role during starvation conditions to limit intracellular ethanolamine concentration, which in excess is toxic to the cells. This Streptomyces coelicolor (strain ATCC BAA-471 / A3(2) / M145) protein is Gamma-glutamylethanolamide synthetase GlnA4.